Consider the following 146-residue polypeptide: Large-conductance mechanosensitive channel (146 aa).

Helical transmembrane passes span Ala-12–Phe-32 and Leu-88–Ile-108.

Belongs to the MscL family. In terms of assembly, homopentamer.

It localises to the cell inner membrane. Its function is as follows. Channel that opens in response to stretch forces in the membrane lipid bilayer. May participate in the regulation of osmotic pressure changes within the cell. The protein is Large-conductance mechanosensitive channel of Bacteroides fragilis (strain ATCC 25285 / DSM 2151 / CCUG 4856 / JCM 11019 / LMG 10263 / NCTC 9343 / Onslow / VPI 2553 / EN-2).